The sequence spans 217 residues: Ribonuclease HII (217 aa).

Residues glutamate 26 to glycine 215 enclose the RNase H type-2 domain. Positions 32, 33, and 124 each coordinate a divalent metal cation.

The protein belongs to the RNase HII family. Mn(2+) is required as a cofactor. The cofactor is Mg(2+).

Its subcellular location is the cytoplasm. It carries out the reaction Endonucleolytic cleavage to 5'-phosphomonoester.. Its function is as follows. Endonuclease that specifically degrades the RNA of RNA-DNA hybrids. In Burkholderia ambifaria (strain ATCC BAA-244 / DSM 16087 / CCUG 44356 / LMG 19182 / AMMD) (Burkholderia cepacia (strain AMMD)), this protein is Ribonuclease HII.